Here is a 1068-residue protein sequence, read N- to C-terminus: Carbamoyl phosphate synthase large chain (1068 aa).

A carboxyphosphate synthetic domain region spans residues 1 to 401; it reads MPRRTDLHRI…SLLKAVRSLE (401 aa). Arg129, Arg169, Gly175, Gly176, Gln208, Ile210, Glu215, Gly241, Val242, His243, Gln284, and Glu298 together coordinate ATP. The region spanning 133–327 is the ATP-grasp 1 domain; that stretch reads KQLMDELGQP…IAKIAAKIAV (195 aa). Gln284, Glu298, and Asn300 together coordinate Mg(2+). Residues Gln284, Glu298, and Asn300 each coordinate Mn(2+). Residues 402–546 are oligomerization domain; that stretch reads IGVDHLALRE…YSTYEMENES (145 aa). A carbamoyl phosphate synthetic domain region spans residues 547-935; that stretch reads KKSQRPSVLV…ALYKVFEAAN (389 aa). The ATP-grasp 2 domain maps to 671–867; sequence ESLLAELGIP…MAEVATRIIL (197 aa). ATP is bound by residues Arg707, Arg746, Leu748, Glu752, Gly777, Val778, His779, Ser780, Gln820, and Glu838. Positions 820, 838, and 840 each coordinate Mg(2+). Mn(2+) is bound by residues Gln820, Glu838, and Asn840. An MGS-like domain is found at 936–1068; sequence LHVPEYGKIL…ESRVFSTESI (133 aa). The allosteric domain stretch occupies residues 936 to 1068; sequence LHVPEYGKIL…ESRVFSTESI (133 aa).

This sequence belongs to the CarB family. As to quaternary structure, composed of two chains; the small (or glutamine) chain promotes the hydrolysis of glutamine to ammonia, which is used by the large (or ammonia) chain to synthesize carbamoyl phosphate. Tetramer of heterodimers (alpha,beta)4. Mg(2+) serves as cofactor. It depends on Mn(2+) as a cofactor.

The catalysed reaction is hydrogencarbonate + L-glutamine + 2 ATP + H2O = carbamoyl phosphate + L-glutamate + 2 ADP + phosphate + 2 H(+). It catalyses the reaction hydrogencarbonate + NH4(+) + 2 ATP = carbamoyl phosphate + 2 ADP + phosphate + 2 H(+). Its pathway is amino-acid biosynthesis; L-arginine biosynthesis; carbamoyl phosphate from bicarbonate: step 1/1. The protein operates within pyrimidine metabolism; UMP biosynthesis via de novo pathway; (S)-dihydroorotate from bicarbonate: step 1/3. Its function is as follows. Large subunit of the glutamine-dependent carbamoyl phosphate synthetase (CPSase). CPSase catalyzes the formation of carbamoyl phosphate from the ammonia moiety of glutamine, carbonate, and phosphate donated by ATP, constituting the first step of 2 biosynthetic pathways, one leading to arginine and/or urea and the other to pyrimidine nucleotides. The large subunit (synthetase) binds the substrates ammonia (free or transferred from glutamine from the small subunit), hydrogencarbonate and ATP and carries out an ATP-coupled ligase reaction, activating hydrogencarbonate by forming carboxy phosphate which reacts with ammonia to form carbamoyl phosphate. This chain is Carbamoyl phosphate synthase large chain, found in Cutibacterium acnes (strain DSM 16379 / KPA171202) (Propionibacterium acnes).